Here is a 339-residue protein sequence, read N- to C-terminus: tRNA-splicing endonuclease (339 aa).

Residues Tyr-274, His-285, and Lys-316 contribute to the active site.

This sequence belongs to the tRNA-intron endonuclease family. Archaeal long subfamily. In terms of assembly, homodimer. Requires Ca(2+) as cofactor. It depends on Mg(2+) as a cofactor. The N-terminus is blocked.

The catalysed reaction is pretRNA = a 3'-half-tRNA molecule with a 5'-OH end + a 5'-half-tRNA molecule with a 2',3'-cyclic phosphate end + an intron with a 2',3'-cyclic phosphate and a 5'-hydroxyl terminus.. Endonuclease that removes tRNA introns. Cleaves pre-tRNA at the 5'- and 3'-splice sites to release the intron. The products are an intron and two tRNA half-molecules bearing 2',3' cyclic phosphate and 5'-OH termini. Recognizes a pseudosymmetric substrate in which 2 bulged loops of 3 bases are separated by a stem of 4 bp. The protein is tRNA-splicing endonuclease of Haloferax volcanii (strain ATCC 29605 / DSM 3757 / JCM 8879 / NBRC 14742 / NCIMB 2012 / VKM B-1768 / DS2) (Halobacterium volcanii).